The chain runs to 187 residues: Benzene 1,2-dioxygenase subunit beta (187 aa).

This sequence belongs to the bacterial ring-hydroxylating dioxygenase beta subunit family. As to quaternary structure, this dioxygenase system consists of four proteins: the two subunits of the hydroxylase component (BedC1 and BedC2), a ferredoxin (BedB) and a ferredoxin reductase (BedA).

It catalyses the reaction benzene + NADH + O2 + H(+) = cis-1,2-dihydrobenzene-1,2-diol + NAD(+). It participates in aromatic compound metabolism; benzene degradation; catechol from benzene: step 1/2. Functionally, the beta subunit may be responsible for the substrate specificity of the enzyme. The sequence is that of Benzene 1,2-dioxygenase subunit beta (bedC2) from Pseudomonas putida (Arthrobacter siderocapsulatus).